We begin with the raw amino-acid sequence, 366 residues long: Histidinol-phosphate aminotransferase 2 (366 aa).

Lys226 is modified (N6-(pyridoxal phosphate)lysine).

It belongs to the class-II pyridoxal-phosphate-dependent aminotransferase family. Histidinol-phosphate aminotransferase subfamily. In terms of assembly, homodimer. It depends on pyridoxal 5'-phosphate as a cofactor.

It catalyses the reaction L-histidinol phosphate + 2-oxoglutarate = 3-(imidazol-4-yl)-2-oxopropyl phosphate + L-glutamate. It participates in amino-acid biosynthesis; L-histidine biosynthesis; L-histidine from 5-phospho-alpha-D-ribose 1-diphosphate: step 7/9. The sequence is that of Histidinol-phosphate aminotransferase 2 from Cupriavidus pinatubonensis (strain JMP 134 / LMG 1197) (Cupriavidus necator (strain JMP 134)).